The primary structure comprises 194 residues: Ribonuclease HII (194 aa).

The RNase H type-2 domain maps to 3–193 (ILTAGVDEAG…VRNLLAQQTL (191 aa)). Residues Asp9, Glu10, and Asp101 each coordinate a divalent metal cation.

This sequence belongs to the RNase HII family. It depends on Mn(2+) as a cofactor. Requires Mg(2+) as cofactor.

Its subcellular location is the cytoplasm. It carries out the reaction Endonucleolytic cleavage to 5'-phosphomonoester.. Endonuclease that specifically degrades the RNA of RNA-DNA hybrids. This Neisseria meningitidis serogroup C (strain 053442) protein is Ribonuclease HII.